The sequence spans 218 residues: Large ribosomal subunit protein uL3 (218 aa).

The protein belongs to the universal ribosomal protein uL3 family. As to quaternary structure, part of the 50S ribosomal subunit. Forms a cluster with proteins L14 and L19.

One of the primary rRNA binding proteins, it binds directly near the 3'-end of the 23S rRNA, where it nucleates assembly of the 50S subunit. This Corynebacterium aurimucosum (strain ATCC 700975 / DSM 44827 / CIP 107346 / CN-1) (Corynebacterium nigricans) protein is Large ribosomal subunit protein uL3.